Reading from the N-terminus, the 621-residue chain is Protein Tra (621 aa).

Residues 126–146 (GAWPVAGSLALIAANVAALVI) form a helical membrane-spanning segment. Residues 275–465 (GEPVQVPLGR…LALSTSGESR (191 aa)) form the FtsK domain. 290–297 (GTSGSGKS) lines the ATP pocket. A helical membrane pass occupies residues 564–584 (VAAAIGTGATTVADVATVTGI).

It is found in the cell membrane. In terms of biological role, major protein required for plasmid transfer. The polypeptide is Protein Tra (tra) (Streptomyces lividans).